We begin with the raw amino-acid sequence, 171 residues long: N5-carboxyaminoimidazole ribonucleotide mutase (171 aa).

Ser10, Asp13, and Arg40 together coordinate substrate.

It belongs to the AIR carboxylase family. Class I subfamily.

It catalyses the reaction 5-carboxyamino-1-(5-phospho-D-ribosyl)imidazole + H(+) = 5-amino-1-(5-phospho-D-ribosyl)imidazole-4-carboxylate. Its pathway is purine metabolism; IMP biosynthesis via de novo pathway; 5-amino-1-(5-phospho-D-ribosyl)imidazole-4-carboxylate from 5-amino-1-(5-phospho-D-ribosyl)imidazole (N5-CAIR route): step 2/2. In terms of biological role, catalyzes the conversion of N5-carboxyaminoimidazole ribonucleotide (N5-CAIR) to 4-carboxy-5-aminoimidazole ribonucleotide (CAIR). The polypeptide is N5-carboxyaminoimidazole ribonucleotide mutase (Thermotoga maritima (strain ATCC 43589 / DSM 3109 / JCM 10099 / NBRC 100826 / MSB8)).